The primary structure comprises 619 residues: Dihydroxy-acid dehydratase (619 aa).

Position 81 (Asp81) interacts with Mg(2+). Cys122 contacts [2Fe-2S] cluster. Mg(2+) is bound by residues Asp123 and Lys124. Position 124 is an N6-carboxylysine (Lys124). Cys198 contacts [2Fe-2S] cluster. Glu494 serves as a coordination point for Mg(2+). Residue Ser520 is the Proton acceptor of the active site.

It belongs to the IlvD/Edd family. In terms of assembly, homodimer. [2Fe-2S] cluster is required as a cofactor. The cofactor is Mg(2+).

The enzyme catalyses (2R)-2,3-dihydroxy-3-methylbutanoate = 3-methyl-2-oxobutanoate + H2O. It catalyses the reaction (2R,3R)-2,3-dihydroxy-3-methylpentanoate = (S)-3-methyl-2-oxopentanoate + H2O. The protein operates within amino-acid biosynthesis; L-isoleucine biosynthesis; L-isoleucine from 2-oxobutanoate: step 3/4. It functions in the pathway amino-acid biosynthesis; L-valine biosynthesis; L-valine from pyruvate: step 3/4. Its function is as follows. Functions in the biosynthesis of branched-chain amino acids. Catalyzes the dehydration of (2R,3R)-2,3-dihydroxy-3-methylpentanoate (2,3-dihydroxy-3-methylvalerate) into 2-oxo-3-methylpentanoate (2-oxo-3-methylvalerate) and of (2R)-2,3-dihydroxy-3-methylbutanoate (2,3-dihydroxyisovalerate) into 2-oxo-3-methylbutanoate (2-oxoisovalerate), the penultimate precursor to L-isoleucine and L-valine, respectively. The sequence is that of Dihydroxy-acid dehydratase from Neisseria meningitidis serogroup A / serotype 4A (strain DSM 15465 / Z2491).